The following is a 1176-amino-acid chain: Growth-differentiation transition protein 5 (1176 aa).

The signal sequence occupies residues 1–25; the sequence is MKNNFFKKTIILLIFLSIFILYSNA. Residues 26 to 913 lie on the Extracellular side of the membrane; it reads DEETITTPPG…DVPANENTLN (888 aa). Residues 914 to 934 traverse the membrane as a helical segment; sequence LLTIVLPICSAVVVASSVMLG. Residues 935 to 1176 are Cytoplasmic-facing; that stretch reads RLFYKKKFKK…NVGYNVHEYF (242 aa). 2 stretches are compositionally biased toward low complexity: residues 965–974 and 1053–1066; these read SNIENKSESI and PQIS…SIPS. Disordered stretches follow at residues 965-985 and 1050-1080; these read SNIE…EQKE and VDTP…PPST. Residues 1067-1078 are compositionally biased toward pro residues; that stretch reads SSPPPPPLPLPP.

This sequence belongs to the GDT family.

The protein localises to the membrane. This chain is Growth-differentiation transition protein 5 (gdt5), found in Dictyostelium discoideum (Social amoeba).